Consider the following 374-residue polypeptide: Putative zinc finger MYND domain-containing protein R331 (374 aa).

Zn(2+) contacts are provided by C328, C331, C341, C344, C350, C354, H362, and C366. The MYND-type zinc finger occupies 328–366; the sequence is CFYCNKNIEKPVVCNKCFRIKYCSEKCQSEYNSYHSDDC.

The chain is Putative zinc finger MYND domain-containing protein R331 from Acanthamoeba polyphaga (Amoeba).